Consider the following 274-residue polypeptide: Phosphatidylglycerol--prolipoprotein diacylglyceryl transferase (274 aa).

A run of 7 helical transmembrane segments spans residues 22–42, 61–81, 96–116, 125–145, 177–197, 204–224, and 238–258; these read LSVR…MWLA, LLFY…VLFY, IWTG…AMVW, FFTV…VGRI, SQLY…NLFW, GAIS…VEFV, and ISMG…MIWV. Residue Arg144 coordinates a 1,2-diacyl-sn-glycero-3-phospho-(1'-sn-glycerol).

This sequence belongs to the Lgt family.

The protein resides in the cell inner membrane. The catalysed reaction is L-cysteinyl-[prolipoprotein] + a 1,2-diacyl-sn-glycero-3-phospho-(1'-sn-glycerol) = an S-1,2-diacyl-sn-glyceryl-L-cysteinyl-[prolipoprotein] + sn-glycerol 1-phosphate + H(+). It participates in protein modification; lipoprotein biosynthesis (diacylglyceryl transfer). Its function is as follows. Catalyzes the transfer of the diacylglyceryl group from phosphatidylglycerol to the sulfhydryl group of the N-terminal cysteine of a prolipoprotein, the first step in the formation of mature lipoproteins. In Aeromonas hydrophila subsp. hydrophila (strain ATCC 7966 / DSM 30187 / BCRC 13018 / CCUG 14551 / JCM 1027 / KCTC 2358 / NCIMB 9240 / NCTC 8049), this protein is Phosphatidylglycerol--prolipoprotein diacylglyceryl transferase.